Here is a 326-residue protein sequence, read N- to C-terminus: JNK1/MAPK8-associated membrane protein homolog (326 aa).

Residues 1–71 (MSSLSGHAST…CESCDTPLQP (71 aa)) are Lumenal-facing. Residue asparagine 27 is glycosylated (N-linked (GlcNAc...) asparagine). A helical transmembrane segment spans residues 72–92 (YDWMYLLFIALLPLLLHMQFI). At 93–108 (RIARKYCRTRYYEVSE) the chain is on the cytoplasmic side. Residues 109-129 (YLCVILENVIACVIAVLIYPP) traverse the membrane as a helical segment. Over 130 to 166 (RFTFFLNGCSKTDIKEWYPACYNPRIGYTKTMRCTYE) the chain is Lumenal. Residues 167–187 (VVFPLYSITFIHHLILIGSIL) traverse the membrane as a helical segment. Residues 188 to 208 (VLRSTLYCVLLYKTYNGKPFY) are Cytoplasmic-facing. Transmembrane regions (helical) follow at residues 209–229 (AAIV…GVVF) and 230–250 (YTFP…HLAL). Residues 251-269 (EGKRPLKEMIVRIATSPTH) are Cytoplasmic-facing. The helical transmembrane segment at 270 to 290 (LIFLSITMLMLSFGVIAIIAP) threads the bilayer. Residues 291–296 (LDIPYR) are Lumenal-facing. A helical membrane pass occupies residues 297–317 (WSFLCIVPVPFIFYMATIPFS). Residues 318–326 (NPTTTMRLS) lie on the Cytoplasmic side of the membrane.

The protein resides in the endoplasmic reticulum membrane. In terms of biological role, facilitates degradation of misfolded endoplasmic reticulum (ER) proteins through the recruitment of components of the proteasome and endoplasmic reticulum-associated degradation (ERAD) system. Involved in ER stress response. This Caenorhabditis elegans protein is JNK1/MAPK8-associated membrane protein homolog.